Reading from the N-terminus, the 765-residue chain is Palmitoyltransferase ZDHHC8 (765 aa).

Topologically, residues 1–13 (MPRSPGTRLKPAK) are cytoplasmic. Residues 14–34 (YIPVATAAALLVGSSTLFFVF) form a helical membrane-spanning segment. The Lumenal segment spans residues 35–52 (TCPWLTRAVSPAVPVYNG). Residues 53–73 (IIFLFVLANFSMATFMDPGVF) traverse the membrane as a helical segment. At 74–148 (PRADEDEDKE…NCIGRRNYRY (75 aa)) the chain is on the cytoplasmic side. Residues 104 to 154 (KWCATCHFYRPPRCSHCSVCDNCVEDFDHHCPWVNNCIGRRNYRYFFLFLL) form the DHHC domain. Cys134 functions as the S-palmitoyl cysteine intermediate in the catalytic mechanism. A helical membrane pass occupies residues 149 to 169 (FFLFLLSLSAHMVGVVAFGLV). Over 170–190 (YVLNHAEGLGAAHTTITMAVM) the chain is Lumenal. A helical membrane pass occupies residues 191-211 (CVAGLFFIPVIGLTGFHVVLV). Residues 212-765 (TRGRTTNEQV…VGGTTYEISV (554 aa)) lie on the Cytoplasmic side of the membrane. Residues 293–352 (GLGRSKSKGSLDRLDEKPLDLGPPLPPKIEAGTFSSDLQTPRPGSAESALSVQRTSPPTP) are disordered. The segment covering 301 to 311 (GSLDRLDEKPL) has biased composition (basic and acidic residues). At Ser337 the chain carries Phosphoserine. At Arg441 the chain carries Omega-N-methylarginine. Residues 509-540 (LHPGATGDPPRPLPRSFSPVLGPRPREPSPVR) are disordered. A phosphoserine mark is found at Ser606, Ser627, Ser675, Ser725, and Ser743. The segment at 613–746 (GPGFGGARNP…PPGPSASPTR (134 aa)) is disordered. The span at 622–653 (PALQTSLSSLSSSVSRAPRTSSSSLQADQASS) shows a compositional bias: low complexity.

It belongs to the DHHC palmitoyltransferase family. ERF2/ZDHHC9 subfamily.

It localises to the golgi apparatus membrane. The protein resides in the mitochondrion membrane. The catalysed reaction is L-cysteinyl-[protein] + hexadecanoyl-CoA = S-hexadecanoyl-L-cysteinyl-[protein] + CoA. Its function is as follows. Palmitoyltransferase that catalyzes the addition of palmitate onto various protein substrates and therefore functions in several unrelated biological processes. Through the palmitoylation of ABCA1 regulates the localization of the transporter to the plasma membrane and thereby regulates its function in cholesterol and phospholipid efflux. Could also pamitoylate the D(2) dopamine receptor DRD2 and regulate its stability and localization to the plasma membrane. Could also play a role in glutamatergic transmission. The sequence is that of Palmitoyltransferase ZDHHC8 from Pan troglodytes (Chimpanzee).